A 327-amino-acid chain; its full sequence is DNA repair and recombination protein RadA (327 aa).

113–120 (GEFGSGKS) provides a ligand contact to ATP.

Belongs to the eukaryotic RecA-like protein family.

In terms of biological role, involved in DNA repair and in homologous recombination. Binds and assemble on single-stranded DNA to form a nucleoprotein filament. Hydrolyzes ATP in a ssDNA-dependent manner and promotes DNA strand exchange between homologous DNA molecules. This is DNA repair and recombination protein RadA from Ignicoccus hospitalis (strain KIN4/I / DSM 18386 / JCM 14125).